We begin with the raw amino-acid sequence, 364 residues long: Transcription factor IIIA (364 aa).

9 consecutive C2H2-type zinc fingers follow at residues 38–62 (FICSFPDCSASYNKAWKLDAHLCKH), 68–92 (FVCDYEGCGKAFIRDYHLSRHVLIH), 98–123 (FVCADDGCNQKFNTKSNLKKHIERKH), 130–154 (YVCSYEGCKKAFKKHQQLRTHQCQH), 160–184 (FRCTHEGCGKHFASPSRLKRHGKVH), 187–211 (YLCQKGCSFMGKTWTELLKHMREAH), 215–237 (ITCNVCQRMFKRRDYLKQHMKTH), 244–269 (YRCPRQGCGRTYTTVFNLQSHILSFH), and 275–299 (FVCEHAGCGKTFAMKQSLMRHSVVH). The tract at residues 299 to 364 (HDPDKKRMKL…PPPAALLTVC (66 aa)) is disordered. Residues 338 to 352 (SLPNASAESSSSPEA) are compositionally biased toward low complexity.

It is found in the nucleus. In terms of biological role, involved in ribosomal large subunit biogenesis. Binds the approximately 50 base pairs internal control region (ICR) of 5S ribosomal RNA genes. It is required for their RNA polymerase III-dependent transcription and may also maintain the transcription of other genes. Also binds the transcribed 5S RNA's. This chain is Transcription factor IIIA (Gtf3a), found in Mus musculus (Mouse).